We begin with the raw amino-acid sequence, 427 residues long: Probable glucuronosyltransferase Os03g0107900 (427 aa).

Residues Met1–Ser33 are Cytoplasmic-facing. Residues Thr34–Ala54 form a helical; Signal-anchor for type II membrane protein membrane-spanning segment. The Lumenal portion of the chain corresponds to Thr55–Arg427. 4 N-linked (GlcNAc...) asparagine glycosylation sites follow: Asn136, Asn168, Asn264, and Asn374.

This sequence belongs to the glycosyltransferase 47 family.

It is found in the golgi apparatus membrane. Its function is as follows. Involved in the synthesis of glucuronoxylan hemicellulose in secondary cell walls. The chain is Probable glucuronosyltransferase Os03g0107900 from Oryza sativa subsp. japonica (Rice).